The chain runs to 458 residues: Glutamyl-tRNA reductase (458 aa).

Substrate contacts are provided by residues 49 to 52 (TCNR), S109, 114 to 116 (EQQ), and Q120. Residue C50 is the Nucleophile of the active site. 191 to 196 (GAGAMA) provides a ligand contact to NADP(+).

The protein belongs to the glutamyl-tRNA reductase family. Homodimer.

The catalysed reaction is (S)-4-amino-5-oxopentanoate + tRNA(Glu) + NADP(+) = L-glutamyl-tRNA(Glu) + NADPH + H(+). The protein operates within porphyrin-containing compound metabolism; protoporphyrin-IX biosynthesis; 5-aminolevulinate from L-glutamyl-tRNA(Glu): step 1/2. Functionally, catalyzes the NADPH-dependent reduction of glutamyl-tRNA(Glu) to glutamate 1-semialdehyde (GSA). This Corynebacterium aurimucosum (strain ATCC 700975 / DSM 44827 / CIP 107346 / CN-1) (Corynebacterium nigricans) protein is Glutamyl-tRNA reductase.